A 355-amino-acid chain; its full sequence is Peptide chain release factor 1 (355 aa).

Gln-233 bears the N5-methylglutamine mark.

Belongs to the prokaryotic/mitochondrial release factor family. Methylated by PrmC. Methylation increases the termination efficiency of RF1.

It is found in the cytoplasm. Its function is as follows. Peptide chain release factor 1 directs the termination of translation in response to the peptide chain termination codons UAG and UAA. In Bacillus mycoides (strain KBAB4) (Bacillus weihenstephanensis), this protein is Peptide chain release factor 1.